The primary structure comprises 250 residues: Probable transcriptional regulatory protein Mkms_2298 (250 aa).

This sequence belongs to the TACO1 family.

Its subcellular location is the cytoplasm. In Mycobacterium sp. (strain KMS), this protein is Probable transcriptional regulatory protein Mkms_2298.